A 59-amino-acid chain; its full sequence is UPF0181 protein YoaH (59 aa).

The protein belongs to the UPF0181 family.

The polypeptide is UPF0181 protein YoaH (Salmonella arizonae (strain ATCC BAA-731 / CDC346-86 / RSK2980)).